The sequence spans 446 residues: Phosphoglucosamine mutase (446 aa).

Ser-101 acts as the Phosphoserine intermediate in catalysis. Positions 101, 240, 242, and 244 each coordinate Mg(2+). At Ser-101 the chain carries Phosphoserine.

This sequence belongs to the phosphohexose mutase family. It depends on Mg(2+) as a cofactor. Post-translationally, activated by phosphorylation.

The catalysed reaction is alpha-D-glucosamine 1-phosphate = D-glucosamine 6-phosphate. Its function is as follows. Catalyzes the conversion of glucosamine-6-phosphate to glucosamine-1-phosphate. The protein is Phosphoglucosamine mutase of Pseudomonas putida (strain ATCC 47054 / DSM 6125 / CFBP 8728 / NCIMB 11950 / KT2440).